A 211-amino-acid polypeptide reads, in one-letter code: Peptidyl-prolyl cis-trans isomerase FKBP14 (211 aa).

A signal peptide spans 1–19 (MRLFLWNAVLTLFVTSLIG). Cys-38 and Cys-96 are disulfide-bonded. A PPIase FKBP-type domain is found at 45–135 (GDLMLVHYEG…IFNIDLLEIR (91 aa)). Positions 135–170 (RNGPRSHESFQEMDLNDDWKLSKDEVKAYLKKEFEK) constitute an EF-hand 1 domain. Asp-148, Asn-150, Asp-152, Lys-154, and Glu-159 together coordinate Ca(2+). A glycan (N-linked (GlcNAc...) asparagine) is linked at Asn-176. The EF-hand 2 domain maps to 179–211 (HHDALVEDIFDKEDEDKDGFISAREFTYKHDEL). Ca(2+) contacts are provided by Asp-192, Asp-194, Asp-196, Phe-198, and Glu-203. A Prevents secretion from ER motif is present at residues 208 to 211 (HDEL).

Monomer. Homodimer. Interacts with type III, type IV and type X collagens.

The protein resides in the endoplasmic reticulum lumen. The catalysed reaction is [protein]-peptidylproline (omega=180) = [protein]-peptidylproline (omega=0). With respect to regulation, inhibited by tacrolimus/FK506. Functionally, PPIase which accelerates the folding of proteins during protein synthesis. Has a preference for substrates containing 4-hydroxylproline modifications, including type III collagen. May also target type VI and type X collagens. This Homo sapiens (Human) protein is Peptidyl-prolyl cis-trans isomerase FKBP14 (FKBP14).